The chain runs to 549 residues: Glucose-6-phosphate isomerase (549 aa).

Glu-353 acts as the Proton donor in catalysis. Residues His-384 and Lys-513 contribute to the active site.

Belongs to the GPI family.

It is found in the cytoplasm. The catalysed reaction is alpha-D-glucose 6-phosphate = beta-D-fructose 6-phosphate. The protein operates within carbohydrate biosynthesis; gluconeogenesis. It functions in the pathway carbohydrate degradation; glycolysis; D-glyceraldehyde 3-phosphate and glycerone phosphate from D-glucose: step 2/4. In terms of biological role, catalyzes the reversible isomerization of glucose-6-phosphate to fructose-6-phosphate. The chain is Glucose-6-phosphate isomerase from Brucella abortus (strain S19).